Reading from the N-terminus, the 606-residue chain is Endo-beta-1,4-xylanase Xyn10C (606 aa).

Positions 1–19 (MKKIQQLLMLSLISSTLIA) are cleaved as a signal peptide. A lipid anchor (N-palmitoyl cysteine) is attached at cysteine 20. The S-diacylglycerol cysteine moiety is linked to residue cysteine 20. The segment at 23 to 64 (GGGGGSTPTTSSSPQSSSPASTPSSASSSSIISSSSLSSSLS) is disordered. Residues 29 to 64 (TPTTSSSPQSSSPASTPSSASSSSIISSSSLSSSLS) show a composition bias toward low complexity. One can recognise a CBM15 domain in the interval 91–242 (GNVVIEVDMA…KSVTITLAQE (152 aa)). Asparagine 106 and glutamine 171 together coordinate a carbohydrate. A disulfide bridge links cysteine 183 with cysteine 200. Position 217 (glutamine 217) interacts with a carbohydrate. The region spanning 245–596 (SANVDHLRDL…KPALRGFADA (352 aa)) is the GH10 domain. Residues 296–299 (NIMK), histidine 332, and asparagine 384 contribute to the substrate site. Glutamate 385 serves as the catalytic Proton donor. Glutamate 497 acts as the Nucleophile in catalysis. A substrate-binding site is contributed by tryptophan 552.

The protein belongs to the glycosyl hydrolase 10 (cellulase F) family.

It is found in the cell outer membrane. The catalysed reaction is Endohydrolysis of (1-&gt;4)-beta-D-xylosidic linkages in xylans.. The protein operates within glycan degradation; xylan degradation. Endo-acting xylanase which specifically cleaves internal linkages on the xylan backbone, releasing xylooligosaccharides. Is able to hydrolyze oat spelt xylan, the arabinoxylans from wheat and rye, and glucuronoxylan. Also displays very low activity against xylooligosaccharides. During the xylan degradation process, Xyn10C may act on the soluble xylans and long xylooligosaccharides products released by the secreted xylanases Xyn11A, Xyn11B and Xyn10A. The chain is Endo-beta-1,4-xylanase Xyn10C (xyn10C) from Cellvibrio japonicus (Pseudomonas fluorescens subsp. cellulosa).